The sequence spans 159 residues: 2-C-methyl-D-erythritol 2,4-cyclodiphosphate synthase (159 aa).

2 residues coordinate a divalent metal cation: D8 and H10. 4-CDP-2-C-methyl-D-erythritol 2-phosphate contacts are provided by residues 8 to 10 (DVH) and 34 to 35 (HS). H42 lines the a divalent metal cation pocket. 4-CDP-2-C-methyl-D-erythritol 2-phosphate-binding positions include 56-58 (DIG), 61-65 (FPDTD), 100-106 (AQEPKMA), 132-135 (TTTE), F139, and R142.

Belongs to the IspF family. In terms of assembly, homotrimer. A divalent metal cation serves as cofactor.

The enzyme catalyses 4-CDP-2-C-methyl-D-erythritol 2-phosphate = 2-C-methyl-D-erythritol 2,4-cyclic diphosphate + CMP. It participates in isoprenoid biosynthesis; isopentenyl diphosphate biosynthesis via DXP pathway; isopentenyl diphosphate from 1-deoxy-D-xylulose 5-phosphate: step 4/6. Its function is as follows. Involved in the biosynthesis of isopentenyl diphosphate (IPP) and dimethylallyl diphosphate (DMAPP), two major building blocks of isoprenoid compounds. Catalyzes the conversion of 4-diphosphocytidyl-2-C-methyl-D-erythritol 2-phosphate (CDP-ME2P) to 2-C-methyl-D-erythritol 2,4-cyclodiphosphate (ME-CPP) with a corresponding release of cytidine 5-monophosphate (CMP). The protein is 2-C-methyl-D-erythritol 2,4-cyclodiphosphate synthase of Alkaliphilus metalliredigens (strain QYMF).